Consider the following 132-residue polypeptide: Regulator of ribonuclease activity B (132 aa).

It belongs to the RraB family. Interacts with the C-terminal region of Rne.

The protein localises to the cytoplasm. In terms of biological role, globally modulates RNA abundance by binding to RNase E (Rne) and regulating its endonucleolytic activity. Can modulate Rne action in a substrate-dependent manner by altering the composition of the degradosome. This is Regulator of ribonuclease activity B from Alteromonas mediterranea (strain DSM 17117 / CIP 110805 / LMG 28347 / Deep ecotype).